A 92-amino-acid polypeptide reads, in one-letter code: Acylphosphatase (92 aa).

The Acylphosphatase-like domain occupies 5 to 92 (GVTIYVYGRV…EDIADFIVRH (88 aa)). Active-site residues include R20 and N38.

The protein belongs to the acylphosphatase family.

The catalysed reaction is an acyl phosphate + H2O = a carboxylate + phosphate + H(+). In Photorhabdus laumondii subsp. laumondii (strain DSM 15139 / CIP 105565 / TT01) (Photorhabdus luminescens subsp. laumondii), this protein is Acylphosphatase (acyP).